Reading from the N-terminus, the 430-residue chain is Glutamate-1-semialdehyde 2,1-aminomutase (430 aa).

K267 is modified (N6-(pyridoxal phosphate)lysine).

The protein belongs to the class-III pyridoxal-phosphate-dependent aminotransferase family. HemL subfamily. Homodimer. Pyridoxal 5'-phosphate serves as cofactor.

It localises to the cytoplasm. The catalysed reaction is (S)-4-amino-5-oxopentanoate = 5-aminolevulinate. Its pathway is porphyrin-containing compound metabolism; protoporphyrin-IX biosynthesis; 5-aminolevulinate from L-glutamyl-tRNA(Glu): step 2/2. The polypeptide is Glutamate-1-semialdehyde 2,1-aminomutase (Anaeromyxobacter dehalogenans (strain 2CP-1 / ATCC BAA-258)).